A 912-amino-acid polypeptide reads, in one-letter code: MAIRLNKVTKLLNVGLSTIVKFLQSRGYLREENPNTKISPEEYEILNQEFHKDKHVKLDSEKLSKERFQKENYDKDKLKQIEEIKMGIPRSNEFQLLLTSKLDLDTLPQDKSQTTIEIKKTIKTSEIKEIKRENKTDILKERKQIEEIKNSYLNKQQKKSNLLSSTDSTINFTITGKIDLTTINNATRPKRKTKEEKQKEREERNKKIVNIKTEKTTQVNAGKKSIASTQTNIEILKRKKRNRIKHEKVNIEQQNISTIPNPKNKHFKFHKPTYKNEVSEEDVQKQIKETLAKLTNSSLKKGTKYRKEKRDTLLQLKNEQYKIKTQENKTIKITEFVTANDLSKMMNVPVVQVISTCMSIGIMVSINQRLDSETIDIVADEFGYKTEYVSAEAIETIIDDENENQEKELVLRPPIVTIMGHVDHGKTSLLDNIRNTNVIAGEAGGITQHIGAYNVKLDDGRKITFLDTPGHEAFTAMRARGAKITDIAIIIIASDDNIMPQTIEAINHAVAAGVPIIFAINKIDKHGANPEKIKETLASMNYLVEDWGGKYQSQDISAKKGIGIQELLEKVLLEAELLDLKANPKRYAIGSIIESSLDKGRGYIATMLIQNGTLKLGDIVLAGIYFGRVKAMFNERNLKIKEAGPSQAVLVLGLNGAPQAGDTIRVVKTEQEAREIAAKREQLQREQSLRTQKLLTLDDISRRIAVKNFHKLNIIVKGDVDGSVEALSDSLIRLSTEQIQINVIHKGVGQISESDVILATASNAFIIGFQVRPSLLTRKLAEKEGVEIRLYSIIYNAIEEVKSAMEGMLIPKTKEEITSNVEIREVYKITKVGSVAGCIVKEGKIKQGDKIRLIRNGVVIYTGELGSLKRYKDYAKEVTQGCECGLNIHNFNDIKVGDIIETFENIETKQKL.

The segment at 185 to 204 is disordered; sequence NATRPKRKTKEEKQKEREER. Residues 193 to 204 are compositionally biased toward basic and acidic residues; that stretch reads TKEEKQKEREER. Residues 411–581 form the tr-type G domain; that stretch reads LRPPIVTIMG…LLEAELLDLK (171 aa). The tract at residues 420–427 is G1; sequence GHVDHGKT. 420-427 contributes to the GTP binding site; that stretch reads GHVDHGKT. The segment at 445–449 is G2; sequence GITQH. The segment at 467 to 470 is G3; sequence DTPG. GTP contacts are provided by residues 467-471 and 521-524; these read DTPGH and NKID. A G4 region spans residues 521–524; it reads NKID. The segment at 557-559 is G5; the sequence is SAK.

The protein belongs to the TRAFAC class translation factor GTPase superfamily. Classic translation factor GTPase family. IF-2 subfamily.

It is found in the cytoplasm. Functionally, one of the essential components for the initiation of protein synthesis. Protects formylmethionyl-tRNA from spontaneous hydrolysis and promotes its binding to the 30S ribosomal subunits. Also involved in the hydrolysis of GTP during the formation of the 70S ribosomal complex. This chain is Translation initiation factor IF-2, found in Azobacteroides pseudotrichonymphae genomovar. CFP2.